The chain runs to 554 residues: MDRDISYQQNYTSTGATATSSRQPSTDNNADTNFLKVMSEFKYNFNSPLPTTTQFPTPYSSNQYQQTQDHFANTDAHNSSSNESSLVENSILPHHQQIQQQQQQQQQQQQQQQALGSLVPPAVTRTDTSETLDDINVQPSSVLQFGNSLPSEFLVASPEQFKEFLLDSPSTNFNFFHKTPAKTPLRFVTDSNGAQQSTTENPGQQQNVFSNVDLNNLLKSNGKTPSSSCTGAFSRTPLSKIDMNLMFNQPLPTSPSKRFSSLSLTPYGRKILNDVGTPYAKALISSNSALVDFQKARKDITTNATSIGLENANNILQRTPLRSNNKKLFIKTPQDTINSTSTLTKDNENKQDIYGSSPTTIQLNSSITKSISKLDNSRIPLLASRSDNILDSNVDDQLFDLGLTRLPLSPTPNCNSLHSTTTGTSALQIPELPKMGSFRSDTGINPISSSNTVSFKSKSGNNNSKGRIKKNGKKPSKFQIIVANIDQFNQDTSSSSLSSSLNASSSAGNSNSNVTKKRASKLKRSQSLLSDSGSKSQARKSCNSKSNGNLFNSQ.

2 disordered regions span residues M1–D31 and I98–S117. Over residues I98–Q113 the composition is skewed to low complexity. T319 carries the post-translational modification Phosphothreonine; by CDC28. Disordered stretches follow at residues P410–P475 and S493–Q554. Positions T411 to L427 are enriched in polar residues. Low complexity predominate over residues S448 to K465. The segment covering G466 to P475 has biased composition (basic residues). Residues S493 to N513 are compositionally biased toward low complexity. A compositionally biased stretch (basic residues) spans T515–R524. Residues S525–S536 show a composition bias toward low complexity. The span at R539–Q554 shows a compositional bias: polar residues.

In terms of assembly, forms an activator complex with FKH2. Post-translationally, phosphorylation of Thr-319 by CDC28 is required for the interaction with FKH2 and recruitment to promoters.

The protein resides in the cytoplasm. Its subcellular location is the nucleus. In terms of biological role, transcription activator involved in G2/M transcription through its association with FKH2. The chain is Nuclear division defective protein 1 (NDD1) from Saccharomyces cerevisiae (strain ATCC 204508 / S288c) (Baker's yeast).